The primary structure comprises 206 residues: Holliday junction branch migration complex subunit RuvA (206 aa).

Residues 1–63 form a domain I region; sequence MIASLRGTVI…EDAMKLYGFI (63 aa). Residues 64–142 are domain II; that stretch reads DNESREMFSV…AFAAGVVDEG (79 aa). The segment at 143–153 is flexible linker; sequence GEQISLPNANI. The tract at residues 154–206 is domain III; sequence ASEVVVEQVSQALVGLGFSEKQSDDAVSFVLAADPSLDTSGALRAALAKLSGK.

The protein belongs to the RuvA family. As to quaternary structure, homotetramer. Forms an RuvA(8)-RuvB(12)-Holliday junction (HJ) complex. HJ DNA is sandwiched between 2 RuvA tetramers; dsDNA enters through RuvA and exits via RuvB. An RuvB hexamer assembles on each DNA strand where it exits the tetramer. Each RuvB hexamer is contacted by two RuvA subunits (via domain III) on 2 adjacent RuvB subunits; this complex drives branch migration. In the full resolvosome a probable DNA-RuvA(4)-RuvB(12)-RuvC(2) complex forms which resolves the HJ.

It is found in the cytoplasm. Functionally, the RuvA-RuvB-RuvC complex processes Holliday junction (HJ) DNA during genetic recombination and DNA repair, while the RuvA-RuvB complex plays an important role in the rescue of blocked DNA replication forks via replication fork reversal (RFR). RuvA specifically binds to HJ cruciform DNA, conferring on it an open structure. The RuvB hexamer acts as an ATP-dependent pump, pulling dsDNA into and through the RuvAB complex. HJ branch migration allows RuvC to scan DNA until it finds its consensus sequence, where it cleaves and resolves the cruciform DNA. The chain is Holliday junction branch migration complex subunit RuvA from Corynebacterium glutamicum (strain ATCC 13032 / DSM 20300 / JCM 1318 / BCRC 11384 / CCUG 27702 / LMG 3730 / NBRC 12168 / NCIMB 10025 / NRRL B-2784 / 534).